The sequence spans 365 residues: 2-aminoethylphosphonate--pyruvate transaminase (365 aa).

An N6-(pyridoxal phosphate)lysine modification is found at Lys194.

Belongs to the class-V pyridoxal-phosphate-dependent aminotransferase family. PhnW subfamily. Homodimer. Pyridoxal 5'-phosphate serves as cofactor.

It carries out the reaction (2-aminoethyl)phosphonate + pyruvate = phosphonoacetaldehyde + L-alanine. Functionally, involved in phosphonate degradation. This chain is 2-aminoethylphosphonate--pyruvate transaminase, found in Bacillus thuringiensis (strain Al Hakam).